We begin with the raw amino-acid sequence, 220 residues long: Large ribosomal subunit protein bL25 (220 aa).

Acidic residues predominate over residues 186-199 (ELEDEDEDEDEVAA). A disordered region spans residues 186–220 (ELEDEDEDEDEVAADEVPATEVDDQAAVKEGEGKE). Residues 211–220 (AAVKEGEGKE) show a composition bias toward basic and acidic residues.

It belongs to the bacterial ribosomal protein bL25 family. CTC subfamily. In terms of assembly, part of the 50S ribosomal subunit; part of the 5S rRNA/L5/L18/L25 subcomplex. Contacts the 5S rRNA. Binds to the 5S rRNA independently of L5 and L18.

Its function is as follows. This is one of the proteins that binds to the 5S RNA in the ribosome where it forms part of the central protuberance. The protein is Large ribosomal subunit protein bL25 of Christiangramia forsetii (strain DSM 17595 / CGMCC 1.15422 / KT0803) (Gramella forsetii).